Here is a 271-residue protein sequence, read N- to C-terminus: Tumor necrosis factor receptor superfamily member 4 (271 aa).

The first 19 residues, 1 to 19 (MYVWVQQPTAFLLLGLSLG), serve as a signal peptide directing secretion. The Extracellular segment spans residues 20–210 (VTVKLNCVKD…TPTLVAPEGP (191 aa)). 2 TNFR-Cys repeats span residues 25–60 (NCVKDTYPSGHKCCRECQPGHGMVSRCDHTRDTVCH) and 61–102 (PCEP…DTVC). 8 disulfide bridges follow: cysteine 26/cysteine 37, cysteine 38/cysteine 51, cysteine 41/cysteine 59, cysteine 62/cysteine 76, cysteine 79/cysteine 94, cysteine 82/cysteine 102, cysteine 104/cysteine 122, and cysteine 125/cysteine 138. The TNFR-Cys 3; truncated repeat unit spans residues 103-123 (QCRPGTQPRQDSSHKLGVDCV). The TNFR-Cys 4 repeat unit spans residues 124 to 164 (PCPPGHFSPGSNQACKPWTNCTLSGKQIRHPASNSLDTVCE). Asparagine 143 is a glycosylation site (N-linked (GlcNAc...) asparagine). Cysteine 144 and cysteine 163 form a disulfide bridge. The chain crosses the membrane as a helical span at residues 211–235 (AFAVILGLGLGLLAPLTVLLALYLL). Residues 236–271 (RKAWRSPNTPKPCWGNSFRTPIQEEQTDTHFTLAKI) are Cytoplasmic-facing.

As to quaternary structure, interacts with TRAF2, TRAF3 and TRAF5. In terms of tissue distribution, activated T-cells.

The protein resides in the membrane. Functionally, receptor for TNFSF4/OX40L/GP34. Is a costimulatory molecule implicated in long-term T-cell immunity. The protein is Tumor necrosis factor receptor superfamily member 4 (Tnfrsf4) of Rattus norvegicus (Rat).